We begin with the raw amino-acid sequence, 814 residues long: MDFLFLLLERKNKHMGKKRVVLLWLSIFISFSSAEITEESPLSIGQTLSSSNGVYELGFFSFNNSQNQYVGISFKGIIPRVVVWVANREKPVTDSAANLVISSNGSLQLFNGKHGVVWSSGKALASNGSRVELLDSGNLVVIEKVSGRTLWESFEHLGDTLLPHSTIMYNVHTGEKRGLTSWKSYTDPSPGDFVVLITPQVPSQGFLMRGSTPYFRSGPWAKTKFTGLPQMDESYTSPFSLTQDVNGSGYYSYFDRDNKRSRIRLTPDGSMKALRYNGMDWDTTYEGPANSCDIYGVCGPFGFCVISVPPKCKCFKGFIPKSIEEWKTGNWTSGCVRRSELHCQGNSTGKDANVFHTVPNIKPPDFYEYADSVDAEECQQNCLNNCSCLAFAYIPGIGCLMWSKDLMDTVQFAAGGELLSIRLARSELDVNKRKKTIIAITVSLTLFVILGFTAFGFWRRRVEQNALISEDAWRNDLQTQDVPGLEYFEMNTIQTATNNFSLSNKLGHGGFGSVYKGKLQDGREIAVKRLSSSSEQGKQEFMNEIVLISKLQHRNLVRVLGCCVEGTEKLLIYEFMKNKSLDTFVFDSKKRLEIDWPKRFDIIQGIARGLLYLHRDSRLRIIHRDLKVSNILLDEKMNPKISDFGLARMFHGTEYQDKTRRVVGTLGYMSPEYAWAGVFSEKSDIYSFGVLLLEIISGEKISRFSYGEEGKTLLAYAWECWCGARGVNLLDQALGDSCHPYEVGRCVQIGLLCVQYQPADRPNTLELLSMLTTTSDLPLPKQPTFVVHTRDGKSPSNDSMITVNEMTESVIHGR.

The signal sequence occupies residues 1–34; sequence MDFLFLLLERKNKHMGKKRVVLLWLSIFISFSSA. Residues 35–154 form the Bulb-type lectin domain; that stretch reads EITEESPLSI…VSGRTLWESF (120 aa). The Extracellular segment spans residues 35–436; sequence EITEESPLSI…ELDVNKRKKT (402 aa). Asparagine 63, asparagine 104, asparagine 127, and asparagine 246 each carry an N-linked (GlcNAc...) asparagine glycan. The region spanning 288-324 is the EGF-like; atypical domain; that stretch reads PANSCDIYGVCGPFGFCVISVPPKCKCFKGFIPKSIE. Disulfide bonds link cysteine 292–cysteine 304 and cysteine 298–cysteine 312. Residues asparagine 330, asparagine 346, and asparagine 385 are each glycosylated (N-linked (GlcNAc...) asparagine). Residues 343-425 form the PAN domain; that stretch reads CQGNSTGKDA…GELLSIRLAR (83 aa). Disulfide bonds link cysteine 378/cysteine 399 and cysteine 382/cysteine 388. A helical transmembrane segment spans residues 437 to 457; sequence IIAITVSLTLFVILGFTAFGF. Residues 458–814 are Cytoplasmic-facing; the sequence is WRRRVEQNAL…EMTESVIHGR (357 aa). One can recognise a Protein kinase domain in the interval 500–785; it reads FSLSNKLGHG…DLPLPKQPTF (286 aa). Residues 506-514 and lysine 528 contribute to the ATP site; that span reads LGHGGFGSV. A phosphoserine mark is found at serine 534 and serine 549. The segment at 589-606 is caM-binding; that stretch reads KKRLEIDWPKRFDIIQGI. Aspartate 625 serves as the catalytic Proton acceptor. Phosphoserine occurs at positions 629 and 642. At threonine 659 the chain carries Phosphothreonine. Serine 702 and serine 796 each carry phosphoserine.

The protein belongs to the protein kinase superfamily. Ser/Thr protein kinase family.

It is found in the cell membrane. It catalyses the reaction L-seryl-[protein] + ATP = O-phospho-L-seryl-[protein] + ADP + H(+). The catalysed reaction is L-threonyl-[protein] + ATP = O-phospho-L-threonyl-[protein] + ADP + H(+). In Arabidopsis thaliana (Mouse-ear cress), this protein is G-type lectin S-receptor-like serine/threonine-protein kinase At1g61400.